We begin with the raw amino-acid sequence, 393 residues long: Putative B3 domain-containing protein Os06g0632500 (393 aa).

3 consecutive DNA-binding regions (TF-B3) follow at residues 27 to 123 (LSVP…FDPG), 141 to 238 (RPRF…FLQN), and 316 to 393 (NSFT…VQRR).

The protein localises to the nucleus. The protein is Putative B3 domain-containing protein Os06g0632500 of Oryza sativa subsp. japonica (Rice).